The following is a 112-amino-acid chain: Protein ECM19 (112 aa).

The helical transmembrane segment at 35 to 57 (NTLDMVTIGIACLVGVYTGTRFF) threads the bilayer. The disordered stretch occupies residues 82–112 (EDGNLLKVTPSLSSTPAAPPTPPTPPTPPQQ). Over residues 98 to 112 (AAPPTPPTPPTPPQQ) the composition is skewed to pro residues.

It is found in the mitochondrion membrane. Functionally, may be involved in cell wall organization and biogenesis. The chain is Protein ECM19 (ECM19) from Saccharomyces cerevisiae (strain ATCC 204508 / S288c) (Baker's yeast).